The primary structure comprises 476 residues: Transcription factor HBP-1b(c1) (476 aa).

3 disordered regions span residues 1–29, 133–159, and 171–207; these read ESRRGGGGPAAAAAAAGDPRGPMPGFGAP, HNNDNWGESSMADTSPRTDTSTDPDID, and QLAAPTASDSSDKSRDKLDHKSLRRLAQNREAARKSR. The segment covering 10-25 has biased composition (low complexity); that stretch reads AAAAAAAGDPRGPMPG. Polar residues predominate over residues 135–144; the sequence is NDNWGESSMA. A compositionally biased stretch (basic and acidic residues) spans 180–191; the sequence is SSDKSRDKLDHK. The bZIP domain occupies 189–252; sequence DHKSLRRLAQ…SSGDQSQSAS (64 aa). Residues 191–211 are basic motif; the sequence is KSLRRLAQNREAARKSRLRKK. A coiled-coil region spans residues 201-242; sequence EAARKSRLRKKAYIQNLESSRLKLTQLEQELQRARQQGIFIS. The leucine-zipper stretch occupies residues 217–231; sequence LESSRLKLTQLEQEL. The DOG1 domain maps to 256–473; it reads AVAFDMEYAR…RALSSLWLAR (218 aa).

This sequence belongs to the bZIP family. As to quaternary structure, binds DNA as a dimer.

The protein localises to the nucleus. In terms of biological role, transcriptional activator that binds specifically to the DNA sequence 5'-TGACG-3'. Recognizes ocs elements like the as-1 motif of the cauliflower mosaic virus 35S promoter. Binding to the as-1-like cis elements mediate auxin- and salicylic acid-inducible transcription. Binds to the hexamer motif 5'-ACGTCA-3' of histone gene promoters. The sequence is that of Transcription factor HBP-1b(c1) from Triticum aestivum (Wheat).